Consider the following 161-residue polypeptide: Pathogenesis-related protein 1 (161 aa).

The signal sequence occupies residues 1–26 (MNFTGYSRFLIVFVALVGALVLPSKA). Residues 34–149 (LRVHNQARGA…NGGTIISCNY (116 aa)) enclose the SCP domain. 3 disulfide bridges follow: cysteine 70/cysteine 138, cysteine 113/cysteine 117, and cysteine 133/cysteine 147.

Belongs to the CRISP family.

The protein localises to the secreted. It localises to the extracellular space. The protein resides in the apoplast. Its function is as follows. Partially responsible for acquired pathogen resistance. This is Pathogenesis-related protein 1 from Arabidopsis thaliana (Mouse-ear cress).